Reading from the N-terminus, the 81-residue chain is Cytotoxin 1 (81 aa).

Positions 1 to 21 (MKTLLLTLVVVTIVCLDLGYT) are cleaved as a signal peptide. Disulfide bonds link cysteine 24–cysteine 42, cysteine 35–cysteine 59, cysteine 63–cysteine 74, and cysteine 75–cysteine 80.

This sequence belongs to the three-finger toxin family. Short-chain subfamily. Type IA cytotoxin sub-subfamily. Monomer in solution; Homodimer and oligomer in the presence of negatively charged lipids forming a pore with a size ranging between 20 and 30 Angstroms. As to expression, expressed by the venom gland.

It localises to the secreted. The protein localises to the target cell membrane. Its function is as follows. Basic protein that binds to cell membrane and depolarizes cardiomyocytes. It also shows lytic activities on many other cells, including red blood cells. Interaction with sulfatides in the cell membrane induces pore formation and cell internalization and is responsible for cytotoxicity in cardiomyocytes. It targets the mitochondrial membrane and induces mitochondrial swelling and fragmentation. It binds to the integrin alpha-V/beta-3 (ITGAV/ITGB3) with a moderate affinity and inhibits protein kinases C. It also binds with high affinity to heparin. It also causes skeletal muscle necrosis after intramuscular injection into mice. The polypeptide is Cytotoxin 1 (Naja atra (Chinese cobra)).